The primary structure comprises 226 residues: Phosphoribosylformylglycinamidine synthase subunit PurQ (226 aa).

One can recognise a Glutamine amidotransferase type-1 domain in the interval 4–226 (RIGVVTFPGS…TSILKKLVNA (223 aa)). C87 (nucleophile) is an active-site residue. Residues H196 and E198 contribute to the active site.

Part of the FGAM synthase complex composed of 1 PurL, 1 PurQ and 2 PurS subunits.

It is found in the cytoplasm. It carries out the reaction N(2)-formyl-N(1)-(5-phospho-beta-D-ribosyl)glycinamide + L-glutamine + ATP + H2O = 2-formamido-N(1)-(5-O-phospho-beta-D-ribosyl)acetamidine + L-glutamate + ADP + phosphate + H(+). The enzyme catalyses L-glutamine + H2O = L-glutamate + NH4(+). It participates in purine metabolism; IMP biosynthesis via de novo pathway; 5-amino-1-(5-phospho-D-ribosyl)imidazole from N(2)-formyl-N(1)-(5-phospho-D-ribosyl)glycinamide: step 1/2. Part of the phosphoribosylformylglycinamidine synthase complex involved in the purines biosynthetic pathway. Catalyzes the ATP-dependent conversion of formylglycinamide ribonucleotide (FGAR) and glutamine to yield formylglycinamidine ribonucleotide (FGAM) and glutamate. The FGAM synthase complex is composed of three subunits. PurQ produces an ammonia molecule by converting glutamine to glutamate. PurL transfers the ammonia molecule to FGAR to form FGAM in an ATP-dependent manner. PurS interacts with PurQ and PurL and is thought to assist in the transfer of the ammonia molecule from PurQ to PurL. The sequence is that of Phosphoribosylformylglycinamidine synthase subunit PurQ from Streptomyces coelicolor (strain ATCC BAA-471 / A3(2) / M145).